Reading from the N-terminus, the 444-residue chain is MKHFEANFDGLVGPTHNYAGLSFGNVASLSNAALVSNPKAAAKQGLQKAKALADMGMVQGMLAPQERPDLYTLRRIGFSGSDANVLKQAAKEAPMLLNACCSASSMWTANAATVSPSADTRDGKLHFTPANLVDKLHRSIEPLTTGRILTATFSDPHYFHHHSHLPEHNSFGDEGAANHTRLCNEYGHAGVELFVYGQEATNPNAPKPQKYPARQTLEASMAVARLHQLEEDNCVFIQQNPDVIDQGVFHNDVIAVGNQNVLFYHEQAFLNTQHKIDEIKRKLDTELYFIEVPTAKVAINDAVKSYLFNTQIITLPSGEMVIVAPTDCQENPAVFAYLNELLTLNTPIKQVLYFDVKQSMQNGGGPACLRLRVAMNEMEVAAVNQHTLMNDALFSRLNLWVDKHYRDRLTTQDLADPQLIIESRTALDELTQIMKLGSVYQFQR.

Residues 19-28, Asn110, and 137-138 contribute to the substrate site; these read AGLSFGNVAS and HR. The active site involves Glu174. Arg214 is a substrate binding site. His250 is a catalytic residue. Substrate-binding residues include Asp252 and Asn362. Catalysis depends on Cys368, which acts as the Nucleophile.

Belongs to the succinylarginine dihydrolase family. Homodimer.

It catalyses the reaction N(2)-succinyl-L-arginine + 2 H2O + 2 H(+) = N(2)-succinyl-L-ornithine + 2 NH4(+) + CO2. The protein operates within amino-acid degradation; L-arginine degradation via AST pathway; L-glutamate and succinate from L-arginine: step 2/5. In terms of biological role, catalyzes the hydrolysis of N(2)-succinylarginine into N(2)-succinylornithine, ammonia and CO(2). The polypeptide is N-succinylarginine dihydrolase (Shewanella baltica (strain OS223)).